The chain runs to 257 residues: Hydroxyethylthiazole kinase (257 aa).

Position 49 (methionine 49) interacts with substrate. ATP is bound by residues arginine 124 and threonine 170. Glycine 197 is a binding site for substrate.

Belongs to the Thz kinase family. It depends on Mg(2+) as a cofactor.

It catalyses the reaction 5-(2-hydroxyethyl)-4-methylthiazole + ATP = 4-methyl-5-(2-phosphooxyethyl)-thiazole + ADP + H(+). It participates in cofactor biosynthesis; thiamine diphosphate biosynthesis; 4-methyl-5-(2-phosphoethyl)-thiazole from 5-(2-hydroxyethyl)-4-methylthiazole: step 1/1. In terms of biological role, catalyzes the phosphorylation of the hydroxyl group of 4-methyl-5-beta-hydroxyethylthiazole (THZ). The protein is Hydroxyethylthiazole kinase of Klebsiella pneumoniae subsp. pneumoniae (strain ATCC 700721 / MGH 78578).